The primary structure comprises 374 residues: Alcohol dehydrogenase 1 (374 aa).

Ser1 is subject to N-acetylserine. Cys46, His67, Cys97, Cys100, Cys103, Cys111, and Cys174 together coordinate Zn(2+). NAD(+) is bound by residues 199 to 204 (GLGGVG), Asp223, Lys228, 292 to 294 (VGV), and Arg369.

Belongs to the zinc-containing alcohol dehydrogenase family. Class-I subfamily. It depends on Zn(2+) as a cofactor.

Its subcellular location is the cytoplasm. It catalyses the reaction a primary alcohol + NAD(+) = an aldehyde + NADH + H(+). It carries out the reaction a secondary alcohol + NAD(+) = a ketone + NADH + H(+). The chain is Alcohol dehydrogenase 1 from Alligator mississippiensis (American alligator).